The sequence spans 711 residues: Polyribonucleotide nucleotidyltransferase (711 aa).

Residues aspartate 489 and aspartate 495 each coordinate Mg(2+). A KH domain is found at 556–615 (PRIHTIKISPDKIKDVIGKGGSVIRALTEETGTTIEIEDDGTVKIAATDGEKAKHAIRRI). Residues 625 to 693 (GRIYNGKVTR…RQGRVRLSIK (69 aa)) form the S1 motif domain.

Belongs to the polyribonucleotide nucleotidyltransferase family. Component of the RNA degradosome, which is a multiprotein complex involved in RNA processing and mRNA degradation. Requires Mg(2+) as cofactor.

It localises to the cytoplasm. It catalyses the reaction RNA(n+1) + phosphate = RNA(n) + a ribonucleoside 5'-diphosphate. Functionally, involved in mRNA degradation. Catalyzes the phosphorolysis of single-stranded polyribonucleotides processively in the 3'- to 5'-direction. The polypeptide is Polyribonucleotide nucleotidyltransferase (Cronobacter sakazakii (strain ATCC BAA-894) (Enterobacter sakazakii)).